Here is a 413-residue protein sequence, read N- to C-terminus: Eukaryotic initiation factor 4A-14 (413 aa).

A Q motif motif is present at residues 40–68 (DSFDAMGLQENLLRGIYAYGFEKPSAIQQ). The region spanning 71–241 (IVPFCKGLDV…RKFMSKPVRI (171 aa)) is the Helicase ATP-binding domain. 84-91 (AQSGTGKT) lines the ATP pocket. The short motif at 189-192 (DEAD) is the DEAD box element. The 162-residue stretch at 252–413 (GIKQFYVNVD…ELPANVADLL (162 aa)) folds into the Helicase C-terminal domain.

It belongs to the DEAD box helicase family. eIF4A subfamily. EIF4F is a multi-subunit complex, the composition of which varies with external and internal environmental conditions. It is composed of at least EIF4A, EIF4E and EIF4G.

The enzyme catalyses ATP + H2O = ADP + phosphate + H(+). In terms of biological role, ATP-dependent RNA helicase which is a subunit of the eIF4F complex involved in cap recognition and is required for mRNA binding to ribosome. In the current model of translation initiation, eIF4A unwinds RNA secondary structures in the 5'-UTR of mRNAs which is necessary to allow efficient binding of the small ribosomal subunit, and subsequent scanning for the initiator codon. The chain is Eukaryotic initiation factor 4A-14 from Nicotiana tabacum (Common tobacco).